The sequence spans 56 residues: Large ribosomal subunit protein bL32c (56 aa).

The protein belongs to the bacterial ribosomal protein bL32 family.

It is found in the plastid. It localises to the chloroplast. The sequence is that of Large ribosomal subunit protein bL32c from Platanus occidentalis (Sycamore).